A 359-amino-acid chain; its full sequence is UPF0496 protein At3g57100 (359 aa).

Residues 179–208 (HEELAKMVVKLEKTMKDIDKKLRRVRGRRA) adopt a coiled-coil conformation. A helical transmembrane segment spans residues 214–234 (LLAPVIAVIFLSKLVAGLVPI).

This sequence belongs to the UPF0496 family.

Its subcellular location is the membrane. This is UPF0496 protein At3g57100 from Arabidopsis thaliana (Mouse-ear cress).